Here is a 204-residue protein sequence, read N- to C-terminus: ATP-dependent Clp protease proteolytic subunit 1 (204 aa).

Serine 97 acts as the Nucleophile in catalysis. The active site involves histidine 122.

It belongs to the peptidase S14 family. As to quaternary structure, fourteen ClpP subunits assemble into 2 heptameric rings which stack back to back to give a disk-like structure with a central cavity, resembling the structure of eukaryotic proteasomes.

Its subcellular location is the cytoplasm. The enzyme catalyses Hydrolysis of proteins to small peptides in the presence of ATP and magnesium. alpha-casein is the usual test substrate. In the absence of ATP, only oligopeptides shorter than five residues are hydrolyzed (such as succinyl-Leu-Tyr-|-NHMec, and Leu-Tyr-Leu-|-Tyr-Trp, in which cleavage of the -Tyr-|-Leu- and -Tyr-|-Trp bonds also occurs).. In terms of biological role, cleaves peptides in various proteins in a process that requires ATP hydrolysis. Has a chymotrypsin-like activity. Plays a major role in the degradation of misfolded proteins. The protein is ATP-dependent Clp protease proteolytic subunit 1 of Trichormus variabilis (strain ATCC 29413 / PCC 7937) (Anabaena variabilis).